The sequence spans 342 residues: Serpentine receptor class gamma-69 (342 aa).

A run of 7 helical transmembrane segments spans residues 11–31, 51–71, 106–126, 140–160, 191–211, 222–242, and 269–289; these read MAGL…SVVV, SLLY…HFLI, PIAI…IVAA, LFVL…IPCK, IAAV…LIAL, AEIS…IYAF, and FAID…STTV.

The protein belongs to the nematode receptor-like protein srg family.

It localises to the membrane. The polypeptide is Serpentine receptor class gamma-69 (srg-69) (Caenorhabditis elegans).